The following is a 145-amino-acid chain: Large ribosomal subunit protein uL11 (145 aa).

Belongs to the universal ribosomal protein uL11 family. Part of the ribosomal stalk of the 50S ribosomal subunit. Interacts with L10 and the large rRNA to form the base of the stalk. L10 forms an elongated spine to which L12 dimers bind in a sequential fashion forming a multimeric L10(L12)X complex. One or more lysine residues are methylated.

Functionally, forms part of the ribosomal stalk which helps the ribosome interact with GTP-bound translation factors. This chain is Large ribosomal subunit protein uL11, found in Coxiella burnetii (strain CbuK_Q154) (Coxiella burnetii (strain Q154)).